The sequence spans 104 residues: Large ribosomal subunit protein bL21c (104 aa).

It belongs to the bacterial ribosomal protein bL21 family. As to quaternary structure, part of the 50S ribosomal subunit.

It localises to the plastid. It is found in the cyanelle. Functionally, this protein binds to 23S rRNA. This Cyanophora paradoxa protein is Large ribosomal subunit protein bL21c.